The chain runs to 186 residues: uncharacterized protein (186 aa).

Residues 89 to 164 enclose the Cupin type-2 domain; that stretch reads LMSLGIGEDI…NTPLKLYSIY (76 aa). Position 117-124 (117-124) interacts with ATP; that stretch reads GIVKMGKS.

This is an uncharacterized protein from Bacillus subtilis (strain 168).